Consider the following 39-residue polypeptide: Photosystem II reaction center protein J (39 aa).

The chain crosses the membrane as a helical span at residues 7–27 (IPLWLVGLVGGLAVITMLSLF).

It belongs to the PsbJ family. PSII is composed of 1 copy each of membrane proteins PsbA, PsbB, PsbC, PsbD, PsbE, PsbF, PsbH, PsbI, PsbJ, PsbK, PsbL, PsbM, PsbT, PsbX, PsbY, PsbZ, Psb30/Ycf12, at least 3 peripheral proteins of the oxygen-evolving complex and a large number of cofactors. It forms dimeric complexes.

It localises to the plastid. The protein resides in the chloroplast thylakoid membrane. In terms of biological role, one of the components of the core complex of photosystem II (PSII). PSII is a light-driven water:plastoquinone oxidoreductase that uses light energy to abstract electrons from H(2)O, generating O(2) and a proton gradient subsequently used for ATP formation. It consists of a core antenna complex that captures photons, and an electron transfer chain that converts photonic excitation into a charge separation. The chain is Photosystem II reaction center protein J from Trieres chinensis (Marine centric diatom).